Consider the following 191-residue polypeptide: Large ribosomal subunit protein bL25 (191 aa).

The protein belongs to the bacterial ribosomal protein bL25 family. CTC subfamily. As to quaternary structure, part of the 50S ribosomal subunit; part of the 5S rRNA/L5/L18/L25 subcomplex. Contacts the 5S rRNA. Binds to the 5S rRNA independently of L5 and L18.

Functionally, this is one of the proteins that binds to the 5S RNA in the ribosome where it forms part of the central protuberance. In Nitratidesulfovibrio vulgaris (strain DSM 19637 / Miyazaki F) (Desulfovibrio vulgaris), this protein is Large ribosomal subunit protein bL25.